Reading from the N-terminus, the 339-residue chain is Mitogen-activated protein kinase kinase kinase 18 (339 aa).

A Protein kinase domain is found at 3-263 (WTRGKTLGRG…ASQLLNHPFL (261 aa)). ATP contacts are provided by residues 9–17 (LGRGSTATV) and Lys32. The active-site Proton acceptor is Asp131. At Ser301 the chain carries Phosphoserine.

This sequence belongs to the protein kinase superfamily. Ser/Thr protein kinase family. In terms of assembly, interacts with ABI1. Binds to MKK3. Associates with SRK2E within the nucleus. In terms of processing, autophosphorylated. Unstable protein degraded by the proteasome pathway; this degradation is promoted by ABI1, but blocked by ABA. As to expression, expressed in roots, leaves and flowers.

The protein resides in the nucleus. It catalyses the reaction L-seryl-[protein] + ATP = O-phospho-L-seryl-[protein] + ADP + H(+). It carries out the reaction L-threonyl-[protein] + ATP = O-phospho-L-threonyl-[protein] + ADP + H(+). Kinase activity is activated by abscisic acid (ABA). Inhibited by ABI1. Activated by SRK2E. Its function is as follows. Component of the abscisic acid (ABA) signaling pathway that acts as ABA signal transducer in the context of abiotic stresses. Triggers MPK1, MPK2, MPK7 and MPK14 activation in a MKK3-dependent manner and MPK6 activation in a MKK3-independent manner. Mediates the ABA-dependent activation of the MKK3-MPK7 module. Positive regulator of ABA responses leading to the induction of gene expression (e.g. RD29B and RAB18) and involved in various responses including stomatal development, stomatal movement, inhibition of germination and root growth. Promotes leaf senescence. The polypeptide is Mitogen-activated protein kinase kinase kinase 18 (Arabidopsis thaliana (Mouse-ear cress)).